We begin with the raw amino-acid sequence, 1447 residues long: Baculoviral IAP repeat-containing protein 1b (1447 aa).

3 BIR repeats span residues 60-127 (EAKR…CEFL), 159-227 (EEAR…CEFL), and 278-345 (EELR…CVFL). Residues Cys315, Cys318, His335, and Cys342 each contribute to the Zn(2+) site. Residues 508-802 (SVMCVEGEAG…EFLAAVRLTE (295 aa)) enclose the NACHT domain. Lys520 contacts ATP.

In terms of assembly, component of the NLRC4 inflammasome, at least composed of NLRC4, caspase-1 (CASP1) and some NAIP protein. Interacts with S.typhimurium (Salmonella) PrgJ and B.thailandensis BsaK.

Functionally, sensor component of the NLRC4 inflammasome that specifically recognizes and binds type III secretion system (T3SS) rod proteins such as S.typhimurium (Salmonella) PrgJ and B.thailandensis BsaK from pathogenic bacteria. Association of pathogenic bacteria proteins drives in turn drive assembly and activation of the NLRC4 inflammasome, promoting caspase-1 activation, cytokine production and macrophage pyroptosis. The NLRC4 inflammasome is activated as part of the innate immune response to a range of intracellular bacteria. The NLRC4 inflammasome senses Gram-negative bacteria such as L.pneumophila and P.aeruginosa, enteric pathogens S.typhimurium (Salmonella) and S.flexneri. Prevents motor-neuron apoptosis induced by a variety of signals. The protein is Baculoviral IAP repeat-containing protein 1b (Naip2) of Mus musculus (Mouse).